We begin with the raw amino-acid sequence, 899 residues long: Suppressor of glycerol defect protein 1 (899 aa).

The segment covering 24 to 33 (QDERFSISEG) has biased composition (basic and acidic residues). 2 disordered regions span residues 24–181 (QDER…VSYP) and 248–326 (ETNS…DDSE). Residues 34–49 (KKRRRGNGKHLSRKEK) are compositionally biased toward basic residues. Polar residues predominate over residues 65–77 (REINSSRLKSAPT). Positions 103–126 (DESESNENWDSDEVLTDEVAEESG) are enriched in acidic residues. 3 stretches are compositionally biased toward basic and acidic residues: residues 134-143 (ETMKKLESLK), 162-174 (SYEK…RDTN), and 251-264 (SMRK…KAFS). Acidic residues predominate over residues 265 to 292 (SDDDLSASDFEDSDGLSESDNDSVADSD). The region spanning 335 to 540 (SKKVNSSLNK…DTMSDLKNNR (206 aa)) is the MIF4G domain. Positions 644–781 (DIRRAIFISI…KLDVFKHVPF (138 aa)) constitute an MI domain. Position 736 is a phosphoserine (serine 736).

The protein belongs to the CWC22 family. Interacts with PLC1.

It is found in the nucleus. The protein localises to the nucleolus. Involved in osmoregulatory glycerol response, probably through its interaction with PLC1 which regulates the expression of GDP1. The protein is Suppressor of glycerol defect protein 1 (SGD1) of Saccharomyces cerevisiae (strain ATCC 204508 / S288c) (Baker's yeast).